The sequence spans 503 residues: Probable cytosol aminopeptidase (503 aa).

Residues Lys-270 and Asp-275 each coordinate Mn(2+). Lys-282 is an active-site residue. 3 residues coordinate Mn(2+): Asp-293, Asp-352, and Glu-354. Arg-356 is a catalytic residue.

The protein belongs to the peptidase M17 family. Mn(2+) is required as a cofactor.

The protein resides in the cytoplasm. The catalysed reaction is Release of an N-terminal amino acid, Xaa-|-Yaa-, in which Xaa is preferably Leu, but may be other amino acids including Pro although not Arg or Lys, and Yaa may be Pro. Amino acid amides and methyl esters are also readily hydrolyzed, but rates on arylamides are exceedingly low.. The enzyme catalyses Release of an N-terminal amino acid, preferentially leucine, but not glutamic or aspartic acids.. In terms of biological role, presumably involved in the processing and regular turnover of intracellular proteins. Catalyzes the removal of unsubstituted N-terminal amino acids from various peptides. This Shigella boydii serotype 4 (strain Sb227) protein is Probable cytosol aminopeptidase.